We begin with the raw amino-acid sequence, 593 residues long: Metal-response element-binding transcription factor 2 (593 aa).

Positions 1–35 are disordered; it reads MRDSTGAGNSLVHKRSPLRRNQKTPTSLTKLSLQD. Positions 12 to 22 are enriched in basic residues; that stretch reads VHKRSPLRRNQ. Over residues 23 to 32 the composition is skewed to polar residues; it reads KTPTSLTKLS. Residue Thr24 is modified to Phosphothreonine. Positions 44–101 constitute a Tudor domain; it reads CKFEEGQDVLARWSDGLFYLGTIKKINILKQSCFIIFEDSSKSWVLWKDIQTGATGSG. PHD-type zinc fingers lie at residues 102 to 157 and 201 to 255; these read EMVC…CVFA and QCYC…CSSG. A Glycyl lysine isopeptide (Lys-Gly) (interchain with G-Cter in SUMO2) cross-link involves residue Lys360. The span at 360 to 374 shows a compositional bias: basic and acidic residues; the sequence is KAEKEPEGTSHEFKI. Disordered stretches follow at residues 360–411 and 424–486; these read KAEK…PYTR and KESI…TRTG. Polar residues predominate over residues 445–454; it reads TAHSSNTSDV. Ser452 carries the phosphoserine modification. Low complexity predominate over residues 459 to 471; sequence ASSAKETTSSSIS. Residue Lys522 forms a Glycyl lysine isopeptide (Lys-Gly) (interchain with G-Cter in SUMO2) linkage.

The protein belongs to the Polycomblike family. Associates with the PRC2 complex, which consists of the core components EED, EZH1 or EZH2, SUZ12, and RBBP4, and various combinations of accessory subunits including AEBP2, JARID2, PHF19, MTF2 and EPOP. Forms a dimeric PRC2.1 (class 1, PRC-PCL) complex consisting of at least SUZ12, RBBP4, and PHF19 or MTF2; PHF19 and MTF2 stabilize the dimeric structure which enhances PRC2 interaction with chromatin.

Its subcellular location is the nucleus. Polycomb group (PcG) protein that specifically binds histone H3 trimethylated at 'Lys-36' (H3K36me3) and recruits the PRC2 complex, thus enhancing PRC2 H3K27me3 methylation activity. Regulates the transcriptional networks during embryonic stem cell self-renewal and differentiation. Promotes recruitment of the PRC2 complex to the inactive X chromosome in differentiating XX ES cells and PRC2 recruitment to target genes in undifferentiated ES cells. Required to repress Hox genes by enhancing H3K27me3 methylation of the PRC2 complex. In some conditions may act as an inhibitor of PRC2 activity: able to activate the CDKN2A gene and promote cellular senescence by suppressing the catalytic activity of the PRC2 complex locally. Binds to the metal-regulating-element (MRE) of MT1A gene promoter. The sequence is that of Metal-response element-binding transcription factor 2 (MTF2) from Homo sapiens (Human).